We begin with the raw amino-acid sequence, 104 residues long: Co-chaperonin GroES 2 (104 aa).

Belongs to the GroES chaperonin family. In terms of assembly, heptamer of 7 subunits arranged in a ring. Interacts with the chaperonin GroEL.

It is found in the cytoplasm. Its function is as follows. Together with the chaperonin GroEL, plays an essential role in assisting protein folding. The GroEL-GroES system forms a nano-cage that allows encapsulation of the non-native substrate proteins and provides a physical environment optimized to promote and accelerate protein folding. GroES binds to the apical surface of the GroEL ring, thereby capping the opening of the GroEL channel. The chain is Co-chaperonin GroES 2 from Rhodopseudomonas palustris (strain ATCC BAA-98 / CGA009).